The chain runs to 176 residues: 4-hydroxylaminobenzoate lyase (176 aa).

Belongs to the PnbB family.

The catalysed reaction is 4-hydroxylaminobenzoate + H2O + H(+) = 3,4-dihydroxybenzoate + NH4(+). In terms of biological role, lyase involved in the degradation of nitroaromatic compounds. Catalyzes the conversion of 4-hydroxylaminobenzoate to 3,4-dihydroxybenzoate (protocatechuate). Required for the catabolism of 4-nitrotoluene. This Pseudomonas putida (Arthrobacter siderocapsulatus) protein is 4-hydroxylaminobenzoate lyase.